The following is a 601-amino-acid chain: Glutathione-regulated potassium-efflux system protein KefB (601 aa).

A run of 13 helical transmembrane segments spans residues 4–24 (SDFL…VPLA), 29–49 (IGAV…GLGF), 55–75 (EILH…GLEL), 87–107 (IFGV…GLLM), 115–135 (AAVV…LQLM), 152–172 (VLLF…LLAG), 177–197 (HFDW…LIGG), 207–227 (FIAA…LVLG), 230–250 (LFMD…GVLL), 268–288 (GLLL…GVLY), 291–311 (LLWV…VLYL), 324–344 (MQFA…FSTA), and 356–376 (ALLL…MKLV). Residues 400–519 (KPQVIVVGFG…AGVTQFSRET (120 aa)) form the RCK N-terminal domain.

Belongs to the monovalent cation:proton antiporter 2 (CPA2) transporter (TC 2.A.37) family. KefB subfamily. Interacts with the regulatory subunit KefG.

The protein localises to the cell inner membrane. Pore-forming subunit of a potassium efflux system that confers protection against electrophiles. Catalyzes K(+)/H(+) antiport. The protein is Glutathione-regulated potassium-efflux system protein KefB of Escherichia coli (strain ATCC 8739 / DSM 1576 / NBRC 3972 / NCIMB 8545 / WDCM 00012 / Crooks).